The following is a 1341-amino-acid chain: Restriction of telomere capping protein 1 (1341 aa).

The segment at Met1–Ser39 is disordered. 6 WD repeats span residues Asn207–Asn248, Glu256–Ser296, Thr305–Ala342, Ala367–Glu406, Asn439–His486, and Leu489–Glu527. Disordered regions lie at residues Pro559 to Ile593, Thr600 to Phe619, Ala630 to Glu651, Lys736 to Asp765, and Asn789 to Arg830. Low complexity predominate over residues Ala630–Thr644. Residues Asp753–Asp765 are compositionally biased toward acidic residues. Residues Ser814 to Arg823 show a composition bias toward low complexity. The stretch at Lys843–Asp883 is one WD 7 repeat. Disordered stretches follow at residues Ala941 to Glu962 and Asp1013 to Pro1043. Composition is skewed to basic and acidic residues over residues Asp951–Glu962 and His1015–Pro1027. Phosphoserine is present on residues Ser1036, Ser1080, Ser1087, Ser1089, Ser1123, and Ser1133. WD repeat units lie at residues Ser1129 to Tyr1169 and Leu1216 to Asn1255. Residues Cys1293–Cys1335 form an RING-type; degenerate zinc finger.

Belongs to the WD repeat RTC1 family. In terms of assembly, component of the SEA complex composed of at least IML1/SEA1, RTC1/SEA2, MTC5/SEA3, NPR2, NPR3, SEA4, SEC13 and SEH1. Interacts with ribosomes.

It is found in the vacuole membrane. Component of the SEA complex which coats the vacuolar membrane and is involved in intracellular trafficking, autophagy, response to nitrogen starvation, and amino acid biogenesis. May be involved in a process influencing telomere capping. The sequence is that of Restriction of telomere capping protein 1 (RTC1) from Saccharomyces cerevisiae (strain ATCC 204508 / S288c) (Baker's yeast).